A 101-amino-acid polypeptide reads, in one-letter code: Small ribosomal subunit protein uS10 (101 aa).

It belongs to the universal ribosomal protein uS10 family. In terms of assembly, part of the 30S ribosomal subunit.

Its function is as follows. Involved in the binding of tRNA to the ribosomes. This chain is Small ribosomal subunit protein uS10, found in Mycobacteroides abscessus (strain ATCC 19977 / DSM 44196 / CCUG 20993 / CIP 104536 / JCM 13569 / NCTC 13031 / TMC 1543 / L948) (Mycobacterium abscessus).